Reading from the N-terminus, the 498-residue chain is ATP synthase subunit beta, chloroplastic (498 aa).

172-179 is a binding site for ATP; the sequence is GGAGVGKT.

The protein belongs to the ATPase alpha/beta chains family. As to quaternary structure, F-type ATPases have 2 components, CF(1) - the catalytic core - and CF(0) - the membrane proton channel. CF(1) has five subunits: alpha(3), beta(3), gamma(1), delta(1), epsilon(1). CF(0) has four main subunits: a(1), b(1), b'(1) and c(9-12).

It is found in the plastid. It localises to the chloroplast thylakoid membrane. The enzyme catalyses ATP + H2O + 4 H(+)(in) = ADP + phosphate + 5 H(+)(out). Functionally, produces ATP from ADP in the presence of a proton gradient across the membrane. The catalytic sites are hosted primarily by the beta subunits. This is ATP synthase subunit beta, chloroplastic from Platanus occidentalis (Sycamore).